The sequence spans 223 residues: Translation initiation factor 6 (223 aa).

The protein belongs to the eIF-6 family.

In terms of biological role, binds to the 50S ribosomal subunit and prevents its association with the 30S ribosomal subunit to form the 70S initiation complex. In Sulfurisphaera tokodaii (strain DSM 16993 / JCM 10545 / NBRC 100140 / 7) (Sulfolobus tokodaii), this protein is Translation initiation factor 6.